The primary structure comprises 566 residues: Oxygen-dependent choline dehydrogenase (566 aa).

An FAD-binding site is contributed by 7–36 (DYIICGAGSAGNVLATRLTEDPNVTVLLLE). The segment at 185 to 204 (EGFGPMDRTVTPKGRRASTA) is disordered. Residue histidine 474 is the Proton acceptor of the active site.

Belongs to the GMC oxidoreductase family. FAD is required as a cofactor.

It carries out the reaction choline + A = betaine aldehyde + AH2. The catalysed reaction is betaine aldehyde + NAD(+) + H2O = glycine betaine + NADH + 2 H(+). The protein operates within amine and polyamine biosynthesis; betaine biosynthesis via choline pathway; betaine aldehyde from choline (cytochrome c reductase route): step 1/1. In terms of biological role, involved in the biosynthesis of the osmoprotectant glycine betaine. Catalyzes the oxidation of choline to betaine aldehyde and betaine aldehyde to glycine betaine at the same rate. The chain is Oxygen-dependent choline dehydrogenase from Burkholderia vietnamiensis (strain G4 / LMG 22486) (Burkholderia cepacia (strain R1808)).